A 453-amino-acid polypeptide reads, in one-letter code: Cyclic GMP-AMP phosphodiesterase SMPDL3A (453 aa).

The signal sequence occupies residues 1–22 (MALVRALVCCLLTAWHCRSGLG). Zn(2+)-binding residues include Asp45 and His47. A disulfide bridge connects residues Cys62 and Cys81. Asn69 is a glycosylation site (N-linked (GlcNAc...) asparagine). A Zn(2+)-binding site is contributed by Asp110. His114 lines the ATP pocket. An N-linked (GlcNAc...) asparagine glycan is attached at Asn131. A Zn(2+)-binding site is contributed by Asn151. ATP is bound by residues Asn151 and His152. 2 N-linked (GlcNAc...) asparagine glycosylation sites follow: Asn222 and Asn238. A Zn(2+)-binding site is contributed by His252. N-linked (GlcNAc...) asparagine glycosylation occurs at Asn263. Zn(2+) contacts are provided by His293 and His295. N-linked (GlcNAc...) asparagine glycosylation is present at Asn356. 2 disulfide bridges follow: Cys420–Cys424 and Cys430–Cys443. Asn437 is a glycosylation site (N-linked (GlcNAc...) asparagine).

It belongs to the acid sphingomyelinase family. As to quaternary structure, monomer. Homodimer; homodimerizes following 2',3'-cGAMP-binding. The cofactor is Zn(2+). In terms of processing, N-glycosylation is required for protein maturation, secretion and phosphodiesterase activity. As to expression, detected in blood serum. Detected in macrophages (at protein level).

It localises to the secreted. It carries out the reaction 2',3'-cGAMP + H2O = 5'-pGpA(2'-5') + H(+). The enzyme catalyses 5'-pGpA(2'-5') + H2O = 5'-GpA(2'-5') + phosphate. It catalyses the reaction a ribonucleoside 5'-triphosphate + H2O = a ribonucleoside 5'-diphosphate + phosphate + H(+). The catalysed reaction is ATP + H2O = ADP + phosphate + H(+). Requires micromolar levels of Zn(2+) for activity. Inhibited by millimolar levels of Zn(2+). In terms of biological role, cyclic-nucleotide phosphodiesterase that acts as a negative regulator of innate immunity by mediating degradation of 2',3'-cGAMP, thereby inhibiting the cGAS-STING signaling. Specifically linearizes 2',3'-cGAMP into 2'5'-bond pGpA and further hydrolyzes pGpA to produce GpA. Also has in vitro nucleotide phosphodiesterase activity with nucleoside triphosphates, such as ATP. Has in vitro activity with p-nitrophenyl-TMP. Has lower activity with nucleoside diphosphates, and no activity with nucleoside monophosphates. Has in vitro activity with CDP-choline, giving rise to CMP and phosphocholine. Has in vitro activity with CDP-ethanolamine. Does not have sphingomyelin phosphodiesterase activity. This Homo sapiens (Human) protein is Cyclic GMP-AMP phosphodiesterase SMPDL3A.